Consider the following 290-residue polypeptide: Undecaprenyl-diphosphatase (290 aa).

8 helical membrane-spanning segments follow: residues 1-21, 49-69, 101-121, 126-146, 160-180, 203-223, 232-252, and 266-286; these read MALW…FLPV, MILF…VVFW, LFWL…TLKA, VFAS…LLWW, INLK…MPGL, YSFF…AIEV, VGFS…IISL, and VFSF…IDLA.

It belongs to the UppP family.

The protein localises to the cell inner membrane. It carries out the reaction di-trans,octa-cis-undecaprenyl diphosphate + H2O = di-trans,octa-cis-undecaprenyl phosphate + phosphate + H(+). In terms of biological role, catalyzes the dephosphorylation of undecaprenyl diphosphate (UPP). Confers resistance to bacitracin. This is Undecaprenyl-diphosphatase from Alkalilimnicola ehrlichii (strain ATCC BAA-1101 / DSM 17681 / MLHE-1).